A 429-amino-acid chain; its full sequence is Glutamate-1-semialdehyde 2,1-aminomutase (429 aa).

An N6-(pyridoxal phosphate)lysine modification is found at Lys-267.

Belongs to the class-III pyridoxal-phosphate-dependent aminotransferase family. HemL subfamily. As to quaternary structure, homodimer. It depends on pyridoxal 5'-phosphate as a cofactor.

It localises to the cytoplasm. The enzyme catalyses (S)-4-amino-5-oxopentanoate = 5-aminolevulinate. Its pathway is porphyrin-containing compound metabolism; protoporphyrin-IX biosynthesis; 5-aminolevulinate from L-glutamyl-tRNA(Glu): step 2/2. This chain is Glutamate-1-semialdehyde 2,1-aminomutase, found in Stenotrophomonas maltophilia (strain R551-3).